A 213-amino-acid polypeptide reads, in one-letter code: Charged multivesicular body protein 2b (213 aa).

An N-acetylalanine modification is found at Ala2. The stretch at 25–55 forms a coiled coil; that stretch reads QRAIIRDRAALEKQEKQLELEIKKMAKIGNK. A compositionally biased stretch (low complexity) spans 179–194; it reads AKAPSAARSLPSASTS. The disordered stretch occupies residues 179–199; sequence AKAPSAARSLPSASTSKATIS. A Phosphoserine modification is found at Ser199. Positions 201–211 match the MIT-interacting motif motif; the sequence is EEIERQLKALG.

It belongs to the SNF7 family. Probable core component of the endosomal sorting required for transport complex III (ESCRT-III). ESCRT-III components are thought to multimerize to form a flat lattice on the perimeter membrane of the endosome. Several assembly forms of ESCRT-III may exist that interact and act sequentially. Interacts with CHMP2A. Interacts with VPS4A. Interacts with VPS4B; the interaction is direct. In terms of tissue distribution, in brain, it is expressed in all neuronal populations with a relatively enhanced expression in the hippocampus, frontal and temporal lobes and in both granule and Purkinje cells of the cerebellum. Not expressed in astrocytes or oligodendrocytes.

It is found in the cytoplasm. The protein resides in the cytosol. Its subcellular location is the late endosome membrane. In terms of biological role, probable core component of the endosomal sorting required for transport complex III (ESCRT-III) which is involved in multivesicular bodies (MVBs) formation and sorting of endosomal cargo proteins into MVBs. MVBs contain intraluminal vesicles (ILVs) that are generated by invagination and scission from the limiting membrane of the endosome and mostly are delivered to lysosomes enabling degradation of membrane proteins, such as stimulated growth factor receptors, lysosomal enzymes and lipids. The MVB pathway appears to require the sequential function of ESCRT-O, -I,-II and -III complexes. ESCRT-III proteins mostly dissociate from the invaginating membrane before the ILV is released. The ESCRT machinery also functions in topologically equivalent membrane fission events, such as the terminal stages of cytokinesis. ESCRT-III proteins are believed to mediate the necessary vesicle extrusion and/or membrane fission activities, possibly in conjunction with the AAA ATPase VPS4. The sequence is that of Charged multivesicular body protein 2b (Chmp2b) from Mus musculus (Mouse).